We begin with the raw amino-acid sequence, 382 residues long: Dodecanoyl-[acyl-carrier-protein] hydrolase, chloroplastic (382 aa).

Residues 1-83 (MATTSLASAF…FSAAEKQWTN (83 aa)) constitute a chloroplast transit peptide. Residues N283, H285, and C320 contribute to the active site.

The protein belongs to the acyl-ACP thioesterase family.

The protein localises to the plastid. It localises to the chloroplast. The enzyme catalyses dodecanoyl-[ACP] + H2O = dodecanoate + holo-[ACP] + H(+). In terms of biological role, plays an essential role in chain termination during de novo fatty acid synthesis. High thioesterase activity for myristoyl-ACP. The polypeptide is Dodecanoyl-[acyl-carrier-protein] hydrolase, chloroplastic (Cinnamomum camphora (Camphor tree)).